Consider the following 550-residue polypeptide: O-phosphoserine--tRNA(Cys) ligase (550 aa).

A disordered region spans residues 1 to 32 (MRFNPQDWKEKSHTNFEGAWHDGPSVITPPGE). Substrate contacts are provided by residues 212–214 (HMT), 257–259 (SAS), 299–300 (YY), and N342.

This sequence belongs to the class-II aminoacyl-tRNA synthetase family. O-phosphoseryl-tRNA(Cys) synthetase subfamily. In terms of assembly, homotetramer. Interacts with SepCysS.

It carries out the reaction tRNA(Cys) + O-phospho-L-serine + ATP = O-phospho-L-seryl-tRNA(Cys) + AMP + diphosphate. Its function is as follows. Catalyzes the attachment of O-phosphoserine (Sep) to tRNA(Cys). The chain is O-phosphoserine--tRNA(Cys) ligase from Methanoregula boonei (strain DSM 21154 / JCM 14090 / 6A8).